A 215-amino-acid polypeptide reads, in one-letter code: Pyrrolidone-carboxylate peptidase (215 aa).

Residues glutamate 78, cysteine 141, and histidine 165 contribute to the active site.

The protein belongs to the peptidase C15 family. As to quaternary structure, homotetramer.

The protein localises to the cytoplasm. The catalysed reaction is Release of an N-terminal pyroglutamyl group from a polypeptide, the second amino acid generally not being Pro.. Functionally, removes 5-oxoproline from various penultimate amino acid residues except L-proline. The polypeptide is Pyrrolidone-carboxylate peptidase (Streptococcus pyogenes serotype M12 (strain MGAS2096)).